The primary structure comprises 58 residues: MTQVTVGENEGIESALRRFKRQVSKSGIFADLKRLRHHETPVEKYKRKLQQRRKARRR.

It belongs to the bacterial ribosomal protein bS21 family.

This Prochlorococcus marinus (strain MIT 9301) protein is Small ribosomal subunit protein bS21.